Reading from the N-terminus, the 371-residue chain is uncharacterized protein (371 aa).

33 to 40 lines the ATP pocket; sequence GPLNSGKT.

This sequence belongs to the archaeal ATPase family.

This is an uncharacterized protein from Methanocaldococcus jannaschii (strain ATCC 43067 / DSM 2661 / JAL-1 / JCM 10045 / NBRC 100440) (Methanococcus jannaschii).